Reading from the N-terminus, the 89-residue chain is Small ribosomal subunit protein uS17 (89 aa).

It belongs to the universal ribosomal protein uS17 family. As to quaternary structure, part of the 30S ribosomal subunit.

In terms of biological role, one of the primary rRNA binding proteins, it binds specifically to the 5'-end of 16S ribosomal RNA. The chain is Small ribosomal subunit protein uS17 from Baumannia cicadellinicola subsp. Homalodisca coagulata.